A 166-amino-acid chain; its full sequence is Arginine repressor (166 aa).

The protein belongs to the ArgR family.

The protein resides in the cytoplasm. Its pathway is amino-acid biosynthesis; L-arginine biosynthesis [regulation]. Its function is as follows. Regulates arginine biosynthesis genes. This Mycobacterium ulcerans (strain Agy99) protein is Arginine repressor.